The chain runs to 466 residues: Gamma-glutamylpolyamine synthetase GlnA3 (466 aa).

Residues 127–466 (GRTVLRRIVA…GVAAAYRWKY (340 aa)) enclose the GS catalytic domain. Residues E151 and E153 each contribute to the Mg(2+) site. An ATP-binding site is contributed by E202. Mg(2+)-binding residues include E207 and E214. G259 provides a ligand contact to L-glutamate. Residue H263 participates in Mg(2+) binding. S267 lines the ATP pocket. Residues R316 and R334 each coordinate L-glutamate. Positions 334 and 339 each coordinate ATP. Position 355 (E355) interacts with Mg(2+).

It belongs to the glutamine synthetase family. Mg(2+) serves as cofactor. As to expression, expressed in mycelium.

It carries out the reaction spermine + L-glutamate + ATP = gamma-L-glutamylspermine + ADP + phosphate + H(+). It catalyses the reaction spermidine + L-glutamate + ATP = gamma-L-glutamylspermidine + ADP + phosphate + H(+). The enzyme catalyses putrescine + L-glutamate + ATP = gamma-L-glutamylputrescine + ADP + phosphate + H(+). The catalysed reaction is cadaverine + L-glutamate + ATP = gamma-L-glutamylcadaverine + ADP + phosphate + H(+). It participates in amine and polyamine degradation; putrescine degradation. It functions in the pathway amine and polyamine degradation; spermidine degradation. The protein operates within amine and polyamine degradation; spermine degradation. Its function is as follows. Involved in the catabolism of polyamines. Catalyzes the ATP-dependent gamma-glutamylation of polyamines. Substrates include putrescine, cadaverine, spermidine and spermine, with a preference for long-chain polyamines spermidine and spermine. Is not able to compensate for the loss of glutamine synthetases (GSs). No complementation of the L-glutamine auxotrophy of an E.coli glnA mutant. Involved in morphological differentiation and in the production of secondary metabolites. Together with GlnA2, enables survival of S.coelicolor under exposure to high local environmental polyamine concentrations, which is toxic to the cells. This chain is Gamma-glutamylpolyamine synthetase GlnA3, found in Streptomyces coelicolor (strain ATCC BAA-471 / A3(2) / M145).